The primary structure comprises 396 residues: Elongation factor Tu (396 aa).

One can recognise a tr-type G domain in the interval 10 to 206 (KPHVNVGTIG…VLDTYIPEPE (197 aa)). Residues 19 to 26 (GHVDHGKT) form a G1 region. 19-26 (GHVDHGKT) contacts GTP. T26 lines the Mg(2+) pocket. Residues 60-64 (GITIN) are G2. The G3 stretch occupies residues 81–84 (DCPG). Residues 81–85 (DCPGH) and 136–139 (NKCD) contribute to the GTP site. A G4 region spans residues 136 to 139 (NKCD). Residues 174-176 (SAT) form a G5 region.

Belongs to the TRAFAC class translation factor GTPase superfamily. Classic translation factor GTPase family. EF-Tu/EF-1A subfamily. Monomer.

Its subcellular location is the cytoplasm. It carries out the reaction GTP + H2O = GDP + phosphate + H(+). GTP hydrolase that promotes the GTP-dependent binding of aminoacyl-tRNA to the A-site of ribosomes during protein biosynthesis. This Psychrobacter cryohalolentis (strain ATCC BAA-1226 / DSM 17306 / VKM B-2378 / K5) protein is Elongation factor Tu.